Consider the following 823-residue polypeptide: MDPECSQLLPALCAVLADPRQPMADDTCLEKLLDWFKTITEAGSSLLLLQENPCLVELLCHMLKPQDLSSRVLSFSLRLTGVFAAQEDCFQYLQQGELLPRLFGEAGPLGGAAWTAPTVRSGWIQGLRSLARHPSALHFLADCGAVDTIFSLQGDSSLFVASAAGQLLVHILGLSMQGPADGPPSLQAGDWPACAQKIVDHIEESLRSAATPQITQALNVLTTTFGHCHDPWTRVLWVRLSPLVAGLLEKDPVPAAHSLVDLLLSVARSPGLSSSSCGLWETLAQTLSRLSPTQAGPLALGILKLQDCPQALRAQAFAVLLQPLACVLKATTQAPGASGMVDGTAGDSVTVDTLLPSKAACVGLLCRTLAHLELLLPLPQRPCPWPQASLLGAAVTLLQLCQGSASPTSDAGRHLCALLLGCVRVQRAALDFLGTLSQGTGPPELVTEVFAVLLEYLRSPDSSPTVLKKAFQATFRWLLSSPKTPGCWDLDPQALLFLRELLPVLQKRLCSPCWEVRDSGLEFLTQMTGRWGGQASFRHALLASEVPKLTEQLLRDPESYVRASAVAATGQLSSQGLCVSPASPEHLGGQQKSPLSELLHILSTDSEGFPRRAAMHVFTQWLRDSHADVVGDTEEFVAGVLQVASQDLDWEVRAQGLELALVFLEQTLGQPGSPCPYAVTPPVVAPARPLAQALQPLCRVRLFEFAFRALFDCDRPVAQKSCDLLLFLRAKTASSSSPQEARISPDVASVEAALQRWQAGDQAQPLGDLEPEVVLAVLRSMDLEGLRGALAESSDHVEKSPQSLLQDMLATVGILGENEADCY.

Residues 100–200 form a required for interaction with NDFIP1 region; sequence PRLFGEAGPL…WPACAQKIVD (101 aa). HEAT repeat units follow at residues 495–531 and 544–576; these read LLFL…TGRW and SEVP…SSQG. Phosphoserine is present on S744. Positions 821 to 823 match the BRAT1-like motif motif; that stretch reads DCY. C822 lines the Zn(2+) pocket.

Belongs to the BRAT1 family. Part of the multiprotein complex composed of BRAT1, WDR73, as well as integrator complex subunits INTS9 and INTS11. Interacts with BRCA1 and ATM. Interacts with MTOR and RPTOR. Interacts with NDFIP1. Interacts with SMC1A and PRKDC. Ubiquitinated by NEDD4, NEDD4L and ITCH; mono- and polyubiquitinated forms are detected.

It is found in the nucleus. The protein localises to the cytoplasm. Component of a multiprotein complex required for the assembly of the RNA endonuclease module of the integrator complex. Associates with INTS9 and INTS11 in the cytoplasm and blocks the active site of INTS11 to inhibit the endonuclease activity of INTS11 before formation of the full integrator complex. Following dissociation of WDR73 of the complex, BRAT1 facilitates the nuclear import of the INTS9-INTS11 heterodimer. In the nucleus, INTS4 is integrated to the INTS9-INTS11 heterodimer and BRAT1 is released from the mature RNA endonuclease module by inositol hexakisphosphate (InsP6). BRAT1 is also involved in DNA damage response; activates kinases ATM, SMC1A and PRKDC by modulating their phosphorylation status following ionizing radiation (IR) stress. Plays a role in regulating mitochondrial function and cell proliferation. Required for protein stability of MTOR and MTOR-related proteins, and cell cycle progress by growth factors. In Ailuropoda melanoleuca (Giant panda), this protein is Integrator complex assembly factor BRAT1 (BRAT1).